The sequence spans 462 residues: Proteases secretion protein PrtF (462 aa).

A signal peptide spans 1-23; sequence MRRKAVLLTVVLSLSGGSAQAMG.

The protein belongs to the outer membrane factor (OMF) (TC 1.B.17) family.

It is found in the cell outer membrane. Functionally, involved in the secretion of proteases A, B, C and G. The sequence is that of Proteases secretion protein PrtF (prtF) from Dickeya chrysanthemi (Pectobacterium chrysanthemi).